Reading from the N-terminus, the 274-residue chain is MQNITQSWFVQGMIKATTDAWLKGWDERNGGNLTLRLDDADIAPYHGNFHAQPRYIPLSQPMPLLANTPFIVTGSGKFFRNVQLDPAANLGVVKVDSDGAGYHILWGLTNEAVPTSELPAHFLSHCERIKATNGKDRVIMHCHATNLIALTYVLENDTAVFTRQLWEGSTECLVVFPDGVGILPWMVPGTDEIGQATAQEMQKHSLVLWPFHGVFGSGSTLDETFGLIDTAEKSAQVLVKVYSMGGMKQTISREELIALGKRFGVTPLASALAL.

Residue Glu-117 is part of the active site. Residues His-141, His-143, and His-212 each coordinate Zn(2+).

Belongs to the aldolase class II family. RhaD subfamily. In terms of assembly, homotetramer. It depends on Zn(2+) as a cofactor.

Its subcellular location is the cytoplasm. It carries out the reaction L-rhamnulose 1-phosphate = (S)-lactaldehyde + dihydroxyacetone phosphate. Its pathway is carbohydrate degradation; L-rhamnose degradation; glycerone phosphate from L-rhamnose: step 3/3. In terms of biological role, catalyzes the reversible cleavage of L-rhamnulose-1-phosphate to dihydroxyacetone phosphate (DHAP) and L-lactaldehyde. The sequence is that of Rhamnulose-1-phosphate aldolase from Shigella sonnei (strain Ss046).